We begin with the raw amino-acid sequence, 499 residues long: Cysteine--tRNA ligase (499 aa).

Position 29 (cysteine 29) interacts with Zn(2+). Positions 31 to 41 (VTVYDLCHLGH) match the 'HIGH' region motif. Residues cysteine 213, histidine 238, and glutamate 242 each contribute to the Zn(2+) site. A 'KMSKS' region motif is present at residues 270 to 274 (KMSKS). Lysine 273 provides a ligand contact to ATP.

Belongs to the class-I aminoacyl-tRNA synthetase family. In terms of assembly, monomer. Zn(2+) serves as cofactor.

Its subcellular location is the cytoplasm. It carries out the reaction tRNA(Cys) + L-cysteine + ATP = L-cysteinyl-tRNA(Cys) + AMP + diphosphate. This Prochlorococcus marinus (strain MIT 9303) protein is Cysteine--tRNA ligase.